Here is an 824-residue protein sequence, read N- to C-terminus: Probable ion channel POLLUX (824 aa).

The span at 45–54 shows a compositional bias: low complexity; sequence DGDDSSNLPT. Positions 45–70 are disordered; that stretch reads DGDDSSNLPTVPNPEEKPVPVPSQSP. The next 4 membrane-spanning stretches (helical) occupy residues 81-101, 135-155, 198-218, and 250-270; these read FSLT…VMFL, AVVF…YMYL, LALL…LYAV, and IVSV…LGLI. RCK N-terminal domains are found at residues 291–432 and 550–699; these read SNHI…ETVV and PEKI…DKSI. The stretch at 325–346 forms a coiled coil; sequence LAERDKEEMETDIAKFEFDLMG.

Belongs to the castor/pollux (TC 1.A.1.23) family.

The protein localises to the nucleus membrane. In Arabidopsis thaliana (Mouse-ear cress), this protein is Probable ion channel POLLUX.